A 534-amino-acid chain; its full sequence is ATP synthase subunit beta 2 (534 aa).

185–192 (GGAGVGKT) is an ATP binding site. The span at 494–505 (AAAREADARREA) shows a compositional bias: basic and acidic residues. The tract at residues 494-534 (AAAREADARREAAAAASGAGPGTTSDPASGSAEPQGARHGR) is disordered.

It belongs to the ATPase alpha/beta chains family. F-type ATPases have 2 components, CF(1) - the catalytic core - and CF(0) - the membrane proton channel. CF(1) has five subunits: alpha(3), beta(3), gamma(1), delta(1), epsilon(1). CF(0) has three main subunits: a(1), b(2) and c(9-12). The alpha and beta chains form an alternating ring which encloses part of the gamma chain. CF(1) is attached to CF(0) by a central stalk formed by the gamma and epsilon chains, while a peripheral stalk is formed by the delta and b chains.

The protein resides in the cell inner membrane. It carries out the reaction ATP + H2O + 4 H(+)(in) = ADP + phosphate + 5 H(+)(out). Functionally, produces ATP from ADP in the presence of a proton gradient across the membrane. The catalytic sites are hosted primarily by the beta subunits. The protein is ATP synthase subunit beta 2 of Burkholderia mallei (strain NCTC 10247).